The chain runs to 1276 residues: Histone-lysine N-methyltransferase PRDM16 (1276 aa).

Residues 1–10 show a composition bias toward basic residues; sequence MRSKARARKL. Positions 1–68 are disordered; that stretch reads MRSKARARKL…DFTPKEGSPY (68 aa). Residues 82–211 form the SET domain; sequence ADFELRESSI…PGEELLVHVK (130 aa). A C2H2-type 1; atypical zinc finger spans residues 230–253; the sequence is FRCDECDELFQSKLDLRRHKKYTC. C2H2-type zinc fingers lie at residues 281-303, 309-331, 337-360, 366-388, and 394-416; these read HECK…MVIH, YKCD…QMSH, FECE…RSQH, HACP…KHIH, and FICE…KRMH. A C2H2-type 7; atypical zinc finger spans residues 423–445; that stretch reads IKCKDCGQMFSTTSSLNKHRRFC. 2 disordered regions span residues 533–657 and 772–804; these read SLLK…APPG and PFDL…QPLD. Residues 561-570 are compositionally biased toward polar residues; sequence AVSNSSQGTT. The segment covering 575 to 597 has biased composition (basic and acidic residues); that stretch reads PEEKFESRLEDSCVEKLKTRSSD. Low complexity predominate over residues 609–624; it reads TTTGTDLDTTTGTGSD. The span at 632–642 shows a compositional bias: basic and acidic residues; sequence DPDKDKGKGKS. The tract at residues 679-1038 is interaction with CTBP1, CTBP2 and ZNF516; it reads DEQLLTATGA…KHEHENAPVS (360 aa). Residues 739–1276 are mediates interaction with SKI and regulation of TGF-beta signaling; it reads PFTDRALAHN…SGAFHPINHL (538 aa). 3 C2H2-type zinc fingers span residues 951–973, 979–1002, and 1008–1032; these read YTCR…LRTH, YRCK…RNIH, and FKCH…KHEH. Disordered stretches follow at residues 1033–1065 and 1105–1163; these read ENAP…HALL and AQCP…EPAA. Positions 1047-1058 are enriched in polar residues; that stretch reads HLGTSASSPTSE. Residues 1116–1133 show a composition bias toward acidic residues; the sequence is EDVEEEDDDDLEEDDEDS.

This sequence belongs to the PRDM16 family. Interacts with CEBPA, CEBPB and CEBPD; the interaction is direct. Interacts with PPARG and PPARA; controls brown adipocytes differentiation. Interacts with CTBP1 and CTBP2; represses the expression of WAT-specific genes. Interacts with PPARGC1A and PPARGC1B; interaction with PPARGC1A or PPARGC1B activates the transcription of BAT-specific gene. Interacts with HDAC1, SKI, SMAD2 and SMAD3; the interaction with SKI promotes the recruitment of SMAD3-HDAC1 complex on the promoter of TGF-beta target genes. Interacts with ZNF516; the interaction is direct and may play a role in the transcription of brown adipose tissue-specific gene. Expressed in uterus and kidney. Expressed in both cardiomyocytes and interstitial cells.

The protein resides in the nucleus. It localises to the cytoplasm. The catalysed reaction is L-lysyl(9)-[histone H3] + S-adenosyl-L-methionine = N(6)-methyl-L-lysyl(9)-[histone H3] + S-adenosyl-L-homocysteine + H(+). Functionally, binds DNA and functions as a transcriptional regulator. Displays histone methyltransferase activity and monomethylates 'Lys-9' of histone H3 (H3K9me1) in vitro. Probably catalyzes the monomethylation of free histone H3 in the cytoplasm which is then transported to the nucleus and incorporated into nucleosomes where SUV39H methyltransferases use it as a substrate to catalyze histone H3 'Lys-9' trimethylation. Likely to be one of the primary histone methyltransferases along with MECOM/PRDM3 that direct cytoplasmic H3K9me1 methylation. Functions in the differentiation of brown adipose tissue (BAT) which is specialized in dissipating chemical energy in the form of heat in response to cold or excess feeding while white adipose tissue (WAT) is specialized in the storage of excess energy and the control of systemic metabolism. Together with CEBPB, regulates the differentiation of myoblastic precursors into brown adipose cells. Functions as a repressor of TGF-beta signaling. Binds DNA and functions as a transcriptional regulator. Functions as a repressor of TGF-beta signaling. May regulate granulocyte differentiation. This is Histone-lysine N-methyltransferase PRDM16 from Homo sapiens (Human).